Reading from the N-terminus, the 614-residue chain is High-affinity choline transporter 1 (614 aa).

The chain crosses the membrane as a helical span at residues 6 to 26 (GVVSIVLFYLLILVVGIWAGR). At 27–44 (KKQSGNDSEEEVMLAGRS) the chain is on the cytoplasmic side. A helical membrane pass occupies residues 45 to 65 (IGLFVGIFTMTATWVGGGYIN). At 66-75 (GTAEAIYTSG) the chain is on the extracellular side. Residues 76–96 (LVWCQAPFGYALSLVFGGIFF) traverse the membrane as a helical segment. Over 97–119 (ANPMRKQGYITMLDPLQDSFGER) the chain is Cytoplasmic. Residues 120-140 (MGGLLFLPALCGEVFWAAGIL) form a helical membrane-spanning segment. Topologically, residues 141–158 (AALGATLSVIIDMDHRTS) are extracellular. A helical transmembrane segment spans residues 159 to 179 (VILSSCIAIFYTLFGGLYSVA). The Cytoplasmic portion of the chain corresponds to 180–185 (YTDVIQ). Residues 186-206 (LFCIFIGLWMCIPFAWSNEHV) traverse the membrane as a helical segment. Topologically, residues 207-225 (GSLSDLEVDWIGHVEPKKH) are extracellular. A helical transmembrane segment spans residues 226 to 246 (WLYIDYGLLLVFGGIPWQVYF). At 247-262 (QRVLSSKTAGRAQLLS) the chain is on the cytoplasmic side. Residues 263-283 (YVAAAGCILMAIPPVLIGAIA) traverse the membrane as a helical segment. The Extracellular segment spans residues 284 to 305 (KATPWNETDYKGPYPLTVDETS). N289 is a glycosylation site (N-linked (GlcNAc...) asparagine). Residues 306 to 326 (MILPMVLQYLTPDFVSFFGLG) traverse the membrane as a helical segment. Residues 327–364 (AVSAAVMSSADSSVLSAASMFARNVYKLIFRQKASEME) are Cytoplasmic-facing. A helical transmembrane segment spans residues 365-385 (IIWVMRVAIIVVGILATIMAL). At 386-394 (TIPSIYGLW) the chain is on the extracellular side. A helical transmembrane segment spans residues 395-415 (SMCSDLVYVILFPQLLMVVHF). Over 416–424 (KKHCNTYGS) the chain is Cytoplasmic. The chain crosses the membrane as a helical span at residues 425 to 445 (LSAYIVALAIRLSGGEAILGL). Residues 446-467 (APLIKYPGYDEETKEQMFPFRT) are Extracellular-facing. A helical transmembrane segment spans residues 468-488 (MAMLLSLVTLISVSWWTKMMF). Topologically, residues 489–614 (ESGKLPPSYD…PTAEQDNTAF (126 aa)) are cytoplasmic. A disordered region spans residues 583 to 614 (ATGVKPSGGGGGHLQSQSGMAMPTAEQDNTAF).

It belongs to the sodium:solute symporter (SSF) (TC 2.A.21) family.

It is found in the membrane. Its function is as follows. Imports choline from the extracellular space to the neuron with high affinity. Rate-limiting step in acetylcholine synthesis. Sodium ion and chloride ion dependent. The chain is High-affinity choline transporter 1 from Drosophila melanogaster (Fruit fly).